Here is a 145-residue protein sequence, read N- to C-terminus: Protein BUD31 homolog 3 (145 aa).

This sequence belongs to the BUD31 (G10) family.

It localises to the nucleus. The polypeptide is Protein BUD31 homolog 3 (Oryza sativa subsp. japonica (Rice)).